A 274-amino-acid chain; its full sequence is Large ribosomal subunit protein uL2 (274 aa).

2 disordered regions span residues 28–53 (KPYA…TTRH) and 221–274 (RGTA…RTKK). Low complexity predominate over residues 39–48 (KSGGRNNNGR). Positions 253-274 (KGKKTRKNKRTEHFIVHRRTKK) are enriched in basic residues.

This sequence belongs to the universal ribosomal protein uL2 family. Part of the 50S ribosomal subunit. Forms a bridge to the 30S subunit in the 70S ribosome.

One of the primary rRNA binding proteins. Required for association of the 30S and 50S subunits to form the 70S ribosome, for tRNA binding and peptide bond formation. It has been suggested to have peptidyltransferase activity; this is somewhat controversial. Makes several contacts with the 16S rRNA in the 70S ribosome. The sequence is that of Large ribosomal subunit protein uL2 from Proteus mirabilis (strain HI4320).